Here is a 178-residue protein sequence, read N- to C-terminus: Cytochrome b6-f complex iron-sulfur subunit (178 aa).

Residues 20 to 42 (LLTFGSVTGVALGALYPVVNYFI) traverse the membrane as a helical segment. The Rieske domain occupies 71 to 161 (THPAGDRSLV…VSVENDNVFV (91 aa)). The [2Fe-2S] cluster site is built by Cys-107, His-109, Cys-125, and His-128. Cys-112 and Cys-127 form a disulfide bridge.

The protein belongs to the Rieske iron-sulfur protein family. In terms of assembly, the 4 large subunits of the cytochrome b6-f complex are cytochrome b6, subunit IV (17 kDa polypeptide, PetD), cytochrome f and the Rieske protein, while the 4 small subunits are PetG, PetL, PetM and PetN. The complex functions as a dimer. It depends on [2Fe-2S] cluster as a cofactor.

Its subcellular location is the cellular thylakoid membrane. It carries out the reaction 2 oxidized [plastocyanin] + a plastoquinol + 2 H(+)(in) = 2 reduced [plastocyanin] + a plastoquinone + 4 H(+)(out). Its function is as follows. Component of the cytochrome b6-f complex, which mediates electron transfer between photosystem II (PSII) and photosystem I (PSI), cyclic electron flow around PSI, and state transitions. The chain is Cytochrome b6-f complex iron-sulfur subunit from Synechococcus sp. (strain WH7803).